A 528-amino-acid chain; its full sequence is Peptide chain release factor 3 (528 aa).

The 270-residue stretch at 10 to 279 folds into the tr-type G domain; sequence AKRRTFAIIS…GLVEWAPAPM (270 aa). GTP contacts are provided by residues 19–26, 87–91, and 141–144; these read SHPDAGKT, DTPGH, and NKLD.

Belongs to the TRAFAC class translation factor GTPase superfamily. Classic translation factor GTPase family. PrfC subfamily.

It is found in the cytoplasm. Functionally, increases the formation of ribosomal termination complexes and stimulates activities of RF-1 and RF-2. It binds guanine nucleotides and has strong preference for UGA stop codons. It may interact directly with the ribosome. The stimulation of RF-1 and RF-2 is significantly reduced by GTP and GDP, but not by GMP. In Escherichia coli O1:K1 / APEC, this protein is Peptide chain release factor 3.